The sequence spans 930 residues: Probable outer membrane protein pmp8 (930 aa).

A signal peptide spans 1–26; sequence MKIPLHKLLISSTLVTPILLSIATYG. The region spanning 636–930 is the Autotransporter domain; the sequence is SIYQQRGLWA…NVDCGLRYSF (295 aa).

Belongs to the PMP outer membrane protein family.

It is found in the secreted. The protein resides in the cell wall. The protein localises to the cell outer membrane. This is Probable outer membrane protein pmp8 (pmp8) from Chlamydia pneumoniae (Chlamydophila pneumoniae).